The sequence spans 214 residues: Uracil phosphoribosyltransferase (214 aa).

Residues R81, R106, and 133 to 141 (DPMLATGNS) each bind 5-phospho-alpha-D-ribose 1-diphosphate. Uracil is bound by residues I196 and 201–203 (GDA). D202 serves as a coordination point for 5-phospho-alpha-D-ribose 1-diphosphate.

The protein belongs to the UPRTase family. Mg(2+) is required as a cofactor.

The catalysed reaction is UMP + diphosphate = 5-phospho-alpha-D-ribose 1-diphosphate + uracil. It participates in pyrimidine metabolism; UMP biosynthesis via salvage pathway; UMP from uracil: step 1/1. Its activity is regulated as follows. Allosterically activated by GTP. In terms of biological role, catalyzes the conversion of uracil and 5-phospho-alpha-D-ribose 1-diphosphate (PRPP) to UMP and diphosphate. This chain is Uracil phosphoribosyltransferase, found in Legionella pneumophila subsp. pneumophila (strain Philadelphia 1 / ATCC 33152 / DSM 7513).